Consider the following 268-residue polypeptide: uncharacterized protein (268 aa).

Helical transmembrane passes span 169 to 189, 190 to 210, and 225 to 245; these read AIIYVFMCLFFSLFWFYQGFA, GVKTSILTGTAEIGLAILWLL, and IFAGFACLGSEIFMWVLLSVF.

It localises to the cell membrane. This is an uncharacterized protein from Bacillus subtilis (strain 168).